The sequence spans 174 residues: Large ribosomal subunit protein uL10 (174 aa).

The protein belongs to the universal ribosomal protein uL10 family. In terms of assembly, part of the ribosomal stalk of the 50S ribosomal subunit. The N-terminus interacts with L11 and the large rRNA to form the base of the stalk. The C-terminus forms an elongated spine to which L12 dimers bind in a sequential fashion forming a multimeric L10(L12)X complex.

In terms of biological role, forms part of the ribosomal stalk, playing a central role in the interaction of the ribosome with GTP-bound translation factors. The sequence is that of Large ribosomal subunit protein uL10 from Desulfovibrio desulfuricans (strain ATCC 27774 / DSM 6949 / MB).